A 579-amino-acid polypeptide reads, in one-letter code: Probable methyl-accepting chemotaxis protein BT9727_0355 (579 aa).

Residues 1–13 (MKKYWHKLSFLQK) lie on the Cytoplasmic side of the membrane. Residues 14–34 (NVLLTVLVILTLVGTMGALSF) form a helical membrane-spanning segment. Topologically, residues 35–198 (NMFQNSMMSI…ASIVPSTKEK (164 aa)) are extracellular. A helical membrane pass occupies residues 199–219 (FIIQGLMFICISVLIATVIQF). The Cytoplasmic portion of the chain corresponds to 220–579 (LIVRNALAPL…LQELIGEFKS (360 aa)). One can recognise an HAMP domain in the interval 223–274 (RNALAPLRDLREGLRRVGEGDLNIKLEERSDDIGIINSYFNNTIEKFKGIID). Glutamate 289 carries the post-translational modification Glutamate methyl ester (Glu). Residues 293–529 (STKENSMAVQ…NIVRVVNELS (237 aa)) form the Methyl-accepting transducer domain. Glutamate 548 is subject to Glutamate methyl ester (Glu).

The protein belongs to the methyl-accepting chemotaxis (MCP) protein family.

The protein localises to the cell membrane. Chemotactic-signal transducers respond to changes in the concentration of attractants and repellents in the environment, transduce a signal from the outside to the inside of the cell, and facilitate sensory adaptation through the variation of the level of methylation. The sequence is that of Probable methyl-accepting chemotaxis protein BT9727_0355 from Bacillus thuringiensis subsp. konkukian (strain 97-27).